A 129-amino-acid chain; its full sequence is Histone H2A type 2-C (129 aa).

Residues 1–22 form a disordered region; that stretch reads MSGRGKQGGKARAKAKSRSSRA. Serine 2 bears the N-acetylserine mark. A Phosphoserine; by RPS6KA5 modification is found at serine 2. The residue at position 4 (arginine 4) is a Citrulline; alternate. Symmetric dimethylarginine; by PRMT5; alternate is present on arginine 4. An N6-(2-hydroxyisobutyryl)lysine; alternate mark is found at lysine 6 and lysine 10. The residue at position 6 (lysine 6) is an N6-acetyllysine; alternate. The span at 7–19 shows a compositional bias: basic residues; that stretch reads QGGKARAKAKSRS. Residue lysine 10 is modified to N6-lactoyllysine; alternate. Position 10 is an N6-succinyllysine; alternate (lysine 10). Residues lysine 14 and lysine 16 each participate in a glycyl lysine isopeptide (Lys-Gly) (interchain with G-Cter in ubiquitin) cross-link. At lysine 37 the chain carries N6-(2-hydroxyisobutyryl)lysine; alternate. Lysine 37 is modified (N6-(beta-hydroxybutyryl)lysine; alternate). N6-crotonyllysine; alternate is present on lysine 37. N6-(2-hydroxyisobutyryl)lysine is present on residues lysine 75 and lysine 76. An N6-(2-hydroxyisobutyryl)lysine; alternate modification is found at lysine 96. Position 96 is an N6-succinyllysine; alternate (lysine 96). Lysine 96 is subject to N6-glutaryllysine; alternate. Lysine 100 is subject to N6-glutaryllysine. The residue at position 105 (glutamine 105) is an N5-methylglutamine. N6-(2-hydroxyisobutyryl)lysine; alternate is present on lysine 119. Residues lysine 119 and lysine 120 each carry the N6-crotonyllysine; alternate modification. N6-glutaryllysine; alternate is present on residues lysine 119 and lysine 120. Lysine 120 participates in a covalent cross-link: Glycyl lysine isopeptide (Lys-Gly) (interchain with G-Cter in ubiquitin); alternate. Threonine 121 carries the post-translational modification Phosphothreonine; by DCAF1. Serine 123 carries the phosphoserine modification. Position 125 is an N6-crotonyllysine (lysine 125).

The protein belongs to the histone H2A family. In terms of assembly, the nucleosome is a histone octamer containing two molecules each of H2A, H2B, H3 and H4 assembled in one H3-H4 heterotetramer and two H2A-H2B heterodimers. The octamer wraps approximately 147 bp of DNA. Deiminated on Arg-4 in granulocytes upon calcium entry. Post-translationally, monoubiquitination of Lys-120 (H2AK119Ub) by RING1, TRIM37 and RNF2/RING2 complex gives a specific tag for epigenetic transcriptional repression and participates in X chromosome inactivation of female mammals. It is involved in the initiation of both imprinted and random X inactivation. Ubiquitinated H2A is enriched in inactive X chromosome chromatin. Ubiquitination of H2A functions downstream of methylation of 'Lys-27' of histone H3 (H3K27me). H2AK119Ub by RNF2/RING2 can also be induced by ultraviolet and may be involved in DNA repair. Following DNA double-strand breaks (DSBs), it is ubiquitinated through 'Lys-63' linkage of ubiquitin moieties by the E2 ligase UBE2N and the E3 ligases RNF8 and RNF168, leading to the recruitment of repair proteins to sites of DNA damage. Ubiquitination at Lys-14 and Lys-16 (H2AK13Ub and H2AK15Ub, respectively) in response to DNA damage is initiated by RNF168 that mediates monoubiquitination at these 2 sites, and 'Lys-63'-linked ubiquitin are then conjugated to monoubiquitin; RNF8 is able to extend 'Lys-63'-linked ubiquitin chains in vitro. H2AK119Ub and ionizing radiation-induced 'Lys-63'-linked ubiquitination (H2AK13Ub and H2AK15Ub) are distinct events. In terms of processing, phosphorylation on Ser-2 (H2AS1ph) is enhanced during mitosis. Phosphorylation on Ser-2 by RPS6KA5/MSK1 directly represses transcription. Acetylation of H3 inhibits Ser-2 phosphorylation by RPS6KA5/MSK1. Phosphorylation at Thr-121 (H2AT120ph) by DCAF1 is present in the regulatory region of many tumor suppresor genes and down-regulates their transcription. Symmetric dimethylation on Arg-4 by the PRDM1/PRMT5 complex may play a crucial role in the germ-cell lineage. Post-translationally, glutamine methylation at Gln-105 (H2AQ104me) by FBL is specifically dedicated to polymerase I. It is present at 35S ribosomal DNA locus and impairs binding of the FACT complex. In terms of processing, crotonylation (Kcr) is specifically present in male germ cells and marks testis-specific genes in post-meiotic cells, including X-linked genes that escape sex chromosome inactivation in haploid cells. Crotonylation marks active promoters and enhancers and confers resistance to transcriptional repressors. It is also associated with post-meiotically activated genes on autosomes. Lactylated in macrophages by EP300/P300 by using lactoyl-CoA directly derived from endogenous or exogenous lactate, leading to stimulates gene transcription.

It localises to the nucleus. The protein resides in the chromosome. Functionally, core component of nucleosome. Nucleosomes wrap and compact DNA into chromatin, limiting DNA accessibility to the cellular machineries which require DNA as a template. Histones thereby play a central role in transcription regulation, DNA repair, DNA replication and chromosomal stability. DNA accessibility is regulated via a complex set of post-translational modifications of histones, also called histone code, and nucleosome remodeling. The sequence is that of Histone H2A type 2-C from Bos taurus (Bovine).